The primary structure comprises 155 residues: Transcriptional repressor NrdR (155 aa).

A zinc finger spans residues 3–34 (CPFCGHSSTQVLDSRVSEDGDTVRRRRRCEAC). Residues 49-139 (PAIVKKNGSR…VYRSFEDVSE (91 aa)) enclose the ATP-cone domain.

The protein belongs to the NrdR family. Zn(2+) is required as a cofactor.

Its function is as follows. Negatively regulates transcription of bacterial ribonucleotide reductase nrd genes and operons by binding to NrdR-boxes. The sequence is that of Transcriptional repressor NrdR from Cupriavidus metallidurans (strain ATCC 43123 / DSM 2839 / NBRC 102507 / CH34) (Ralstonia metallidurans).